The sequence spans 128 residues: CD59 glycoprotein (128 aa).

The signal sequence occupies residues 1–25; that stretch reads MGIQGGSVLFGLLLVLAVFCHSGHS. The region spanning 26-108 is the UPAR/Ly6 domain; the sequence is LQCYNCPNPT…QLENGGTSLS (83 aa). 5 disulfide bridges follow: Cys28–Cys51, Cys31–Cys38, Cys44–Cys64, Cys70–Cys88, and Cys89–Cys94. N-linked (GlcNAc...) asparagine glycosylation occurs at Asn43. Asn102 carries the GPI-anchor amidated asparagine lipid modification. A propeptide spans 103 to 128 (removed in mature form); the sequence is GGTSLSEKTVVLLVTLLLAAAWCLHP.

As to quaternary structure, interacts with T-cell surface antigen CD2. In terms of processing, N- and O-glycosylated.

It localises to the cell membrane. The protein resides in the secreted. Functionally, potent inhibitor of the complement membrane attack complex (MAC) action, which protects self-cells from damage during complement activation. Acts by binding to the beta-haipins of C8 (C8A and C8B) components of the assembling MAC, forming an intermolecular beta-sheet that prevents incorporation of the multiple copies of C9 required for complete formation of the osmolytic pore. The chain is CD59 glycoprotein from Chlorocebus aethiops (Green monkey).